Reading from the N-terminus, the 142-residue chain is Putative nickel-responsive regulator (142 aa).

Ni(2+)-binding residues include histidine 77, histidine 88, histidine 90, and cysteine 96.

This sequence belongs to the transcriptional regulatory CopG/NikR family. In terms of assembly, homotetramer. Requires Ni(2+) as cofactor.

Its function is as follows. Transcriptional regulator. The polypeptide is Putative nickel-responsive regulator (Halobacterium salinarum (strain ATCC 700922 / JCM 11081 / NRC-1) (Halobacterium halobium)).